The chain runs to 644 residues: Protein lin-9 (644 aa).

The interval 1-77 (MSSAVRSPRK…GRDSPSVNSL (77 aa)) is disordered. Residues 50–62 (SIKRTGSPKKSPA) show a composition bias toward basic residues.

The protein belongs to the lin-9 family. Component of the DRM complex, at least composed of lin-9, lin-35, lin-37, lin-52, lin-53, lin-54- dpl-1 and efl-1. Interacts with zft-11; the interaction is required to suppress the activation of non-neuronal genes in neurons.

Its subcellular location is the nucleus. In terms of biological role, synthetic multivulva class B (synMuvB) protein. SynMuvB proteins are required to repress the induction of vulval development by Ras signaling and probably act by forming the multiprotein DRM complex that represses transcription. Required for the development of sheath cells in the hermaphrodite gonad and for the development of the male spicule, rays and gonad. In association with the zinc finger protein ztf-11, negatively regulates the expression of non-neuronal genes during neurogenesis. The polypeptide is Protein lin-9 (Caenorhabditis elegans).